The primary structure comprises 1791 residues: MMVFQSFILGNLVSLCMKIINSVVVVGLYYGFLTTFSIGPSYLFLLRARVMDEGEEGTEKKVSATTGFIAGQLMMFISIYYAPLHLALGRPHTITVLALPYLLFHFFWNNHKHFFDYGSTTRNEMRNLRIQCVFLNNLIFQLFNHFILPSSMLARLVNIYMFRCNNKMLFVTSSFVGWLIGHILFMKWVGLVLVWIQQNHSIRSNVLIRSNKYKFLVSELRNSMARIFSILLFITCVYYLGRIPSPIFTKKLKGTSETGGTKQDQEVSTEEAPFPSLFSEEREDLDKIDEMEEIRVNGKDKINKDDEFHVRTYYNYKTVSENLDGNKENSNLEFFKIKKKEDRFLWFEKPFVTLVFDYKRWNRPNRYIKNDKIENTVRNEMSQYFFYTCQSDGKERISFTYPPNLSTFFEMIQKKIPSFTREKRPSDQVSTYWSLINEEKKENLKKEFLNRIDALDKEWSGENILEKTTRFCHNETKKEYLPKIYDPFLHGVSRGRIKKLPQFQIITESNRKKNIGGSWINKIHGILLKINYHKFEQTIEKLNRESLSIEKKLSFFSEPQEEKIYSEEEIQIFKFLFDVVITDSNDQTLIKNFMDFHEITKKVPRWSYKLISELEDLEGENEENVTMEPGIRSRKAKRVVVFTDKEPHNEIYTNLKDNQNSDQNDEMALIRYSQQSDFRREIIKGSMRSQRRKTVIWEFFQAKVHSPLFFDRIDKLFYFSFDIWGLKKKILSNLMCKKKKKKKMDKKDEEQSKIEEKRQIEIAETWDSFLFAQIIRGSLLVTQSILRKYIILPLLIIIKNSVRMLLFQFPEWSEDLKDWKREMHVKCTYNGVQLSETEFPKNWLTDGIQIKILFPFYLKPWHKQSSQKARLKKKRDKGEKKDFCFLTVWGMETELPFGSAQKKPSFFEPISKELKKRINKFKTKSFLVLRIFKERATIFIKVTKEIKNRILKNFLFIKGKIKDLSKRNLIPLFGPREIYELNETKKDSIMSNQMIHELSVQKKSMEWTNSSLSENKIQNVIDRIKTIRNQIKEISKEKQNLTNSCNKLRYDSKIIEPSKKIWQTFKRKNTRLIRKSIFFIKFCIEQLSIAIFLGIINIPRITTQLFFESTKTILDKYIYKAEENGEKKKKKKNTIYFISTIKNLISNKKKISYDLCSLSQAYVFYKLSQIQVSNFSKLKAVLEYNICITSLFVKNQIKDFFQEQGIFHYDLKDKTFFNSEVNQWKNWLRSNYQYNLPQIAWARLVTKKWKKKINQDSLVLNPSLTKEDSYEKKKFDNYKKQSVFEADSLLNPKHNLKKNSIYNLFCYKSIHSTEKTFDTSIGIALDNCLVSCFLEKYNIRGIGEIRHRKYLDWRILNFWFTKKVNIEPWVDTKSKKKYINTKVQNYQRIDKITKTGLANQKSLFFDWMGMNEEILNRRITNFEFFFFPEFFLFSSTYKMKPWVIPIKLLLLNFNENINVNKKITRKKKGFIPSNEKKSLRFYNLNKEEKESASQVELESDKENKKNPESALLKQEKNIEENYAESTIKKRKNKKQYKSNTEAELDLFLTRHSRFQLRWNCFFNQKILNNVKVYCLLVRLKNPNEIAISSIERGEMSLDILMIEKNFTFAKLMKKGILIIEPVRLSVQNDGQLIIYRTIGISLVHKNKHKISQRYKKKSYSDKQKIEKSITKYQNKTVNRKKNNYDFFVPENILSPKRRREFRILICFNLKKKNARDRNSRFDKNIQNLTTVLDKKKDLVKNKNNLIKFKSFLWPNFRLEDLACMNRYWFNTTNGNHFSMIRIHMYTRFPLH.

The next 6 helical transmembrane spans lie at 19–39 (IINS…FSIG), 68–88 (FIAG…HLAL), 91–111 (PHTI…WNNH), 133–153 (VFLN…SSML), 176–196 (VGWL…LVWI), and 227–247 (IFSI…PSPI). Positions 1492 to 1511 (ASQVELESDKENKKNPESAL) are disordered. Basic and acidic residues predominate over residues 1498 to 1511 (ESDKENKKNPESAL).

The protein belongs to the TIC214 family. Part of the Tic complex.

It localises to the plastid. It is found in the chloroplast inner membrane. In terms of biological role, involved in protein precursor import into chloroplasts. May be part of an intermediate translocation complex acting as a protein-conducting channel at the inner envelope. In Barbarea verna (Land cress), this protein is Protein TIC 214.